A 185-amino-acid polypeptide reads, in one-letter code: p53 apoptosis effector related to PMP-22 (185 aa).

A run of 4 helical transmembrane segments spans residues 13–33, 74–94, 105–125, and 143–163; these read WILPMLLLFAIIFDIIAIAAQ, VAALMIIGLIILIFAFIISLV, LPFIGLLLILAVIVQIIALII, and WAYGFGWGATILTLGCAILFC.

This sequence belongs to the TMEM47 family.

It localises to the cell junction. The protein localises to the desmosome. It is found in the cell membrane. Its subcellular location is the cytoplasm. Functionally, component of intercellular desmosome junctions. Positively regulates apoptosis in the early-stage embryo in response to UV irradiation, this is partially dependent on tp53 activation. Required for the survival of cell populations in the developing notochord and skin, therefore required for normal embryogenesis beyond 30 hpf. Acts as a positive regulator of endothelial cell apoptosis in response to blood flow-derived shear stress. This is p53 apoptosis effector related to PMP-22 from Danio rerio (Zebrafish).